Here is a 175-residue protein sequence, read N- to C-terminus: uncharacterized protein (175 aa).

It is found in the cytoplasm. Its subcellular location is the nucleus. This is an uncharacterized protein from Schizosaccharomyces pombe (strain 972 / ATCC 24843) (Fission yeast).